Consider the following 313-residue polypeptide: tRNA(Ile)-lysidine synthase (313 aa).

37–42 (SGGPDS) is a binding site for ATP.

The protein belongs to the tRNA(Ile)-lysidine synthase family.

Its subcellular location is the cytoplasm. The enzyme catalyses cytidine(34) in tRNA(Ile2) + L-lysine + ATP = lysidine(34) in tRNA(Ile2) + AMP + diphosphate + H(+). In terms of biological role, ligates lysine onto the cytidine present at position 34 of the AUA codon-specific tRNA(Ile) that contains the anticodon CAU, in an ATP-dependent manner. Cytidine is converted to lysidine, thus changing the amino acid specificity of the tRNA from methionine to isoleucine. In Corynebacterium efficiens (strain DSM 44549 / YS-314 / AJ 12310 / JCM 11189 / NBRC 100395), this protein is tRNA(Ile)-lysidine synthase.